Reading from the N-terminus, the 217-residue chain is Large ribosomal subunit protein uL3 (217 aa).

The interval 137-160 is disordered; it reads VSASHGSHRNHRKPGSIGASSTPS.

It belongs to the universal ribosomal protein uL3 family. As to quaternary structure, part of the 50S ribosomal subunit. Forms a cluster with proteins L14 and L19.

In terms of biological role, one of the primary rRNA binding proteins, it binds directly near the 3'-end of the 23S rRNA, where it nucleates assembly of the 50S subunit. In Clavibacter michiganensis subsp. michiganensis (strain NCPPB 382), this protein is Large ribosomal subunit protein uL3.